The primary structure comprises 332 residues: N-acetyl-gamma-glutamyl-phosphate reductase (332 aa).

Cys144 is an active-site residue.

The protein belongs to the NAGSA dehydrogenase family. Type 1 subfamily.

Its subcellular location is the cytoplasm. The enzyme catalyses N-acetyl-L-glutamate 5-semialdehyde + phosphate + NADP(+) = N-acetyl-L-glutamyl 5-phosphate + NADPH + H(+). The protein operates within amino-acid biosynthesis; L-arginine biosynthesis; N(2)-acetyl-L-ornithine from L-glutamate: step 3/4. Functionally, catalyzes the NADPH-dependent reduction of N-acetyl-5-glutamyl phosphate to yield N-acetyl-L-glutamate 5-semialdehyde. This Archaeoglobus fulgidus (strain ATCC 49558 / DSM 4304 / JCM 9628 / NBRC 100126 / VC-16) protein is N-acetyl-gamma-glutamyl-phosphate reductase.